The chain runs to 368 residues: UPF0284 protein Tery_1555 (368 aa).

The protein belongs to the UPF0284 family.

The protein is UPF0284 protein Tery_1555 of Trichodesmium erythraeum (strain IMS101).